Consider the following 184-residue polypeptide: Photosystem I assembly protein Ycf4 (184 aa).

Helical transmembrane passes span 21–43 (NFCW…ISSY) and 68–90 (FYGI…NVGS).

Belongs to the Ycf4 family.

It localises to the plastid. The protein resides in the chloroplast thylakoid membrane. In terms of biological role, seems to be required for the assembly of the photosystem I complex. This Physcomitrium patens (Spreading-leaved earth moss) protein is Photosystem I assembly protein Ycf4.